Consider the following 505-residue polypeptide: Deoxyguanosinetriphosphate triphosphohydrolase (505 aa).

An HD domain is found at 66 to 273; that stretch reads RLTHSMEVQQ…MEAADDISYC (208 aa).

This sequence belongs to the dGTPase family. Type 1 subfamily. Homotetramer. Mg(2+) serves as cofactor.

The catalysed reaction is dGTP + H2O = 2'-deoxyguanosine + triphosphate + H(+). Its function is as follows. dGTPase preferentially hydrolyzes dGTP over the other canonical NTPs. The polypeptide is Deoxyguanosinetriphosphate triphosphohydrolase (Salmonella enteritidis PT4 (strain P125109)).